Here is a 413-residue protein sequence, read N- to C-terminus: Serine hydroxymethyltransferase (413 aa).

(6S)-5,6,7,8-tetrahydrofolate-binding positions include L119 and 123–125 (GHL). K228 is modified (N6-(pyridoxal phosphate)lysine).

Belongs to the SHMT family. Homodimer. Pyridoxal 5'-phosphate serves as cofactor.

It is found in the cytoplasm. It catalyses the reaction (6R)-5,10-methylene-5,6,7,8-tetrahydrofolate + glycine + H2O = (6S)-5,6,7,8-tetrahydrofolate + L-serine. The protein operates within one-carbon metabolism; tetrahydrofolate interconversion. It functions in the pathway amino-acid biosynthesis; glycine biosynthesis; glycine from L-serine: step 1/1. In terms of biological role, catalyzes the reversible interconversion of serine and glycine with tetrahydrofolate (THF) serving as the one-carbon carrier. This reaction serves as the major source of one-carbon groups required for the biosynthesis of purines, thymidylate, methionine, and other important biomolecules. Also exhibits THF-independent aldolase activity toward beta-hydroxyamino acids, producing glycine and aldehydes, via a retro-aldol mechanism. The sequence is that of Serine hydroxymethyltransferase from Caldanaerobacter subterraneus subsp. tengcongensis (strain DSM 15242 / JCM 11007 / NBRC 100824 / MB4) (Thermoanaerobacter tengcongensis).